Consider the following 107-residue polypeptide: SOSS complex subunit C (107 aa).

Belongs to the SOSS-C family. As to quaternary structure, belongs to the multiprotein complex Integrator. Component of the SOSS complex, composed of soss-b (soss-b1/nabp2 or soss-b2/nabp1), soss-a/ints3 and soss-c/inip.

The protein localises to the nucleus. In terms of biological role, component of the SOSS complex, a multiprotein complex that functions downstream of the MRN complex to promote DNA repair and G2/M checkpoint. The SOSS complex associates with single-stranded DNA at DNA lesions and influences diverse endpoints in the cellular DNA damage response including cell-cycle checkpoint activation, recombinational repair and maintenance of genomic stability. Required for efficient homologous recombination-dependent repair of double-strand breaks (DSBs). This Salmo salar (Atlantic salmon) protein is SOSS complex subunit C (inip).